The sequence spans 472 residues: F420-non-reducing hydrogenase subunit A (472 aa).

Ni(2+) is bound by residues cysteine 61, cysteine 64, cysteine 442, and cysteine 445.

This sequence belongs to the [NiFe]/[NiFeSe] hydrogenase large subunit family. As to quaternary structure, the F420-non-reducing hydrogenase is composed of three subunits; MvhA, MvhD and MvhG. It forms a complex with the heterodisulfide reductase (hdr). The cofactor is Ni(2+).

Functionally, part of a complex that provides reducing equivalents for heterodisulfide reductase. The chain is F420-non-reducing hydrogenase subunit A (mvhA) from Methanothermobacter thermautotrophicus (strain ATCC 29096 / DSM 1053 / JCM 10044 / NBRC 100330 / Delta H) (Methanobacterium thermoautotrophicum).